Here is a 342-residue protein sequence, read N- to C-terminus: (+)-pulegone reductase (342 aa).

NADP(+)-binding positions include 163–166 (GSVG), lysine 189, tyrosine 205, asparagine 229, 251–257 (CGMVSQY), 281–283 (FVV), and asparagine 331.

Belongs to the NADP-dependent oxidoreductase L4BD family.

It is found in the cytoplasm. It carries out the reaction (2R,5R)-isomenthone + NADP(+) = (R)-pulegone + NADPH + H(+). The enzyme catalyses (1R,4S)-menthone + NADP(+) = (R)-pulegone + NADPH + H(+). Its pathway is secondary metabolite biosynthesis; terpenoid biosynthesis. Not inhibited by (+)-menthofuran. In terms of biological role, monoterpene synthase that catalyzes the specific reduction of the 4,8-double bond of (+)-pulegone to produce both (-)-menthone and (+)-isomenthone in a 70:30 ratio. Unable to utilize either (-)-isopiperitenone or (+)-cis-isopulegone, or to catalyze the reverse reaction with (-)-menthone or (+)-isomenthone. Has an absolute requirement for NADPH. The polypeptide is (+)-pulegone reductase (Mentha piperita (Peppermint)).